A 925-amino-acid chain; its full sequence is Serine/threonine-protein kinase PLK4 (925 aa).

In terms of domain architecture, Protein kinase spans 12 to 265; it reads FKVGNLLGKG…LSSVLDHPFM (254 aa). ATP-binding positions include 18–26 and K41; that span reads LGKGSFAGV. N6-acetyllysine occurs at positions 45 and 46. D136 serves as the catalytic Proton acceptor. 2 disordered regions span residues 262–283 and 328–394; these read HPFMSRNPSPKSKDVGTVEDSM and KNSS…KTYS. The span at 330–341 shows a compositional bias: low complexity; it reads SSDFSSGDGSNF. Residues 342-353 are compositionally biased toward polar residues; it reads CTQWGNPEQEAN. The segment covering 359 to 369 has biased composition (basic and acidic residues); the sequence is RVIEDAEERPH. The span at 381–391 shows a compositional bias: polar residues; the sequence is RASPSNQSRAK. S400 carries the phosphoserine modification. Positions 517–538 are disordered; it reads EVMPQEPGLHPHSEQSKNRSME. The span at 525–536 shows a compositional bias: basic and acidic residues; it reads LHPHSEQSKNRS. The region spanning 547-660 is the Cryptic POLO box 1 (CPB1) domain; that stretch reads TLRSITSPLI…SRFIQLVRSK (114 aa). The Cryptic POLO box 2 (CPB2) domain maps to 661 to 774; the sequence is TPKITYFTRY…GRKPGNTSSP (114 aa). S778 bears the Phosphoserine mark. Residues 841–919 form the POLO box domain; sequence QLLKSVFVKN…LSSILLMFSN (79 aa).

Belongs to the protein kinase superfamily. Ser/Thr protein kinase family. CDC5/Polo subfamily. In terms of assembly, homodimer. Interacts with CEP152 (via N-terminus). Interacts with CEP78; this interaction may be important for proper PLK4 localization to the centriole and PLK4-induced overduplication of centrioles. Interacts with CEP131. Interacts simultaneously with TENT5C and CEP192. Interacts with TENT5C; this interaction leads to the TENT5C recruitment in the centrosome. Interacts with CEP85; this interaction may be important in cell migration and centriole assembly. Post-translationally, ubiquitinated; leading to its degradation by the proteasome. Deubiquitinated by USP54; leading to PLK4 stabilization. Tyrosine-phosphorylated by TEC. In terms of processing, acetylation by KAT2A and KAT2B impairs kinase activity by shifting the kinase to an inactive conformation. Expressed in tissues associated with mitotic and meiotic cell division. Highly expressed in testis.

The protein localises to the cytoplasm. Its subcellular location is the cytoskeleton. The protein resides in the microtubule organizing center. It is found in the centrosome. It localises to the centriole. The protein localises to the nucleus. Its subcellular location is the nucleolus. The protein resides in the cleavage furrow. The enzyme catalyses L-seryl-[protein] + ATP = O-phospho-L-seryl-[protein] + ADP + H(+). It carries out the reaction L-threonyl-[protein] + ATP = O-phospho-L-threonyl-[protein] + ADP + H(+). In terms of biological role, serine/threonine-protein kinase that plays a central role in centriole duplication. Able to trigger procentriole formation on the surface of the parental centriole cylinder, leading to the recruitment of centriole biogenesis proteins such as SASS6, CPAP, CCP110, CEP135 and gamma-tubulin. When overexpressed, it is able to induce centrosome amplification through the simultaneous generation of multiple procentrioles adjoining each parental centriole during S phase. Phosphorylates 'Ser-151' of FBXW5 during the G1/S transition, leading to inhibit FBXW5 ability to ubiquitinate SASS6. Its central role in centriole replication suggests a possible role in tumorigenesis, centrosome aberrations being frequently observed in tumors. Phosphorylates CDC25C and CHEK2. Also involved in deuterosome-mediated centriole amplification in multiciliated that can generate more than 100 centrioles. Also involved in trophoblast differentiation by phosphorylating HAND1, leading to disrupt the interaction between HAND1 and MDFIC and activate HAND1. Required for the recruitment of STIL to the centriole and for STIL-mediated centriole amplification. Phosphorylates CEP131 at 'Ser-78' and PCM1 at 'Ser-372' which is essential for proper organization and integrity of centriolar satellites. The protein is Serine/threonine-protein kinase PLK4 of Mus musculus (Mouse).